Here is a 283-residue protein sequence, read N- to C-terminus: Pantothenate synthetase (283 aa).

30 to 37 (MGNLHDGH) lines the ATP pocket. His37 (proton donor) is an active-site residue. Gln61 serves as a coordination point for (R)-pantoate. Position 61 (Gln61) interacts with beta-alanine. 149-152 (GEKD) is a binding site for ATP. Position 155 (Gln155) interacts with (R)-pantoate. An ATP-binding site is contributed by 186–189 (LSSR).

The protein belongs to the pantothenate synthetase family. Homodimer.

It is found in the cytoplasm. It catalyses the reaction (R)-pantoate + beta-alanine + ATP = (R)-pantothenate + AMP + diphosphate + H(+). It functions in the pathway cofactor biosynthesis; (R)-pantothenate biosynthesis; (R)-pantothenate from (R)-pantoate and beta-alanine: step 1/1. Its function is as follows. Catalyzes the condensation of pantoate with beta-alanine in an ATP-dependent reaction via a pantoyl-adenylate intermediate. In Escherichia coli (strain SMS-3-5 / SECEC), this protein is Pantothenate synthetase.